The chain runs to 341 residues: Anthranilate phosphoribosyltransferase (341 aa).

5-phospho-alpha-D-ribose 1-diphosphate contacts are provided by residues Gly79, 82–83 (GD), Thr87, 89–92 (NIST), 107–115 (KHGNRSISS), and Ser119. Gly79 contributes to the anthranilate binding site. Ser91 contributes to the Mg(2+) binding site. Asn110 serves as a coordination point for anthranilate. Residue Arg164 participates in anthranilate binding. Residues Asp222 and Glu223 each contribute to the Mg(2+) site.

The protein belongs to the anthranilate phosphoribosyltransferase family. In terms of assembly, homodimer. It depends on Mg(2+) as a cofactor.

The catalysed reaction is N-(5-phospho-beta-D-ribosyl)anthranilate + diphosphate = 5-phospho-alpha-D-ribose 1-diphosphate + anthranilate. It functions in the pathway amino-acid biosynthesis; L-tryptophan biosynthesis; L-tryptophan from chorismate: step 2/5. In terms of biological role, catalyzes the transfer of the phosphoribosyl group of 5-phosphorylribose-1-pyrophosphate (PRPP) to anthranilate to yield N-(5'-phosphoribosyl)-anthranilate (PRA). This chain is Anthranilate phosphoribosyltransferase, found in Blochmanniella pennsylvanica (strain BPEN).